We begin with the raw amino-acid sequence, 185 residues long: Peptidyl-tRNA hydrolase (185 aa).

Tyr15 provides a ligand contact to tRNA. His20 (proton acceptor) is an active-site residue. Positions 64, 66, and 112 each coordinate tRNA.

Belongs to the PTH family. As to quaternary structure, monomer.

The protein resides in the cytoplasm. The catalysed reaction is an N-acyl-L-alpha-aminoacyl-tRNA + H2O = an N-acyl-L-amino acid + a tRNA + H(+). Functionally, hydrolyzes ribosome-free peptidyl-tRNAs (with 1 or more amino acids incorporated), which drop off the ribosome during protein synthesis, or as a result of ribosome stalling. In terms of biological role, catalyzes the release of premature peptidyl moieties from peptidyl-tRNA molecules trapped in stalled 50S ribosomal subunits, and thus maintains levels of free tRNAs and 50S ribosomes. The sequence is that of Peptidyl-tRNA hydrolase from Porphyromonas gingivalis (strain ATCC BAA-308 / W83).